A 297-amino-acid chain; its full sequence is Aspartate carbamoyltransferase catalytic subunit (297 aa).

The carbamoyl phosphate site is built by Arg-48 and Thr-49. Lys-76 lines the L-aspartate pocket. 3 residues coordinate carbamoyl phosphate: Arg-98, His-129, and Gln-132. Residues Arg-162 and Arg-214 each contribute to the L-aspartate site. Carbamoyl phosphate-binding residues include Ala-257 and Pro-258.

This sequence belongs to the aspartate/ornithine carbamoyltransferase superfamily. ATCase family. Heterododecamer (2C3:3R2) of six catalytic PyrB chains organized as two trimers (C3), and six regulatory PyrI chains organized as three dimers (R2).

It catalyses the reaction carbamoyl phosphate + L-aspartate = N-carbamoyl-L-aspartate + phosphate + H(+). Its pathway is pyrimidine metabolism; UMP biosynthesis via de novo pathway; (S)-dihydroorotate from bicarbonate: step 2/3. Its function is as follows. Catalyzes the condensation of carbamoyl phosphate and aspartate to form carbamoyl aspartate and inorganic phosphate, the committed step in the de novo pyrimidine nucleotide biosynthesis pathway. The sequence is that of Aspartate carbamoyltransferase catalytic subunit from Leuconostoc mesenteroides subsp. mesenteroides (strain ATCC 8293 / DSM 20343 / BCRC 11652 / CCM 1803 / JCM 6124 / NCDO 523 / NBRC 100496 / NCIMB 8023 / NCTC 12954 / NRRL B-1118 / 37Y).